We begin with the raw amino-acid sequence, 276 residues long: CASP-like protein 4A3 (276 aa).

A compositionally biased stretch (polar residues) spans 1–13 (MPSMSPSSISTEK). Positions 1–76 (MPSMSPSSIS…PVKIEETPSP (76 aa)) are disordered. The Cytoplasmic segment spans residues 1–126 (MPSMSPSSIS…RRSRREEIVK (126 aa)). Residues 43 to 72 (SLDHSSDSEKEDEKRRPESRRNKNPVKIEE) show a composition bias toward basic and acidic residues. The chain crosses the membrane as a helical span at residues 127 to 147 (FVALGFRLSEVVLALISFSIM). Residues 148-167 (AADKTKGWSGDSFDRYKEYR) are Extracellular-facing. A helical transmembrane segment spans residues 168 to 188 (FCLSVNVVAFIYASFQACDLA). Topologically, residues 189–205 (YHLVKEKHLISHHLRPL) are cytoplasmic. Residues 206-226 (FEFIIDQVLAYLLMCASTAAV) traverse the membrane as a helical segment. The Extracellular segment spans residues 227–244 (TRVDDWVSNWGKDDFTEM). Residues 245-265 (ASASIAMSFLTFLAFAFSSLI) traverse the membrane as a helical segment. Over 266 to 276 (SGYNLFNQDSL) the chain is Cytoplasmic.

It belongs to the Casparian strip membrane proteins (CASP) family. As to quaternary structure, homodimer and heterodimers.

It localises to the cell membrane. The polypeptide is CASP-like protein 4A3 (Arabidopsis lyrata subsp. lyrata (Lyre-leaved rock-cress)).